A 221-amino-acid chain; its full sequence is GTP cyclohydrolase III (221 aa).

It belongs to the archaeal-type GTP cyclohydrolase family.

It carries out the reaction GTP + 3 H2O = 2-amino-5-formylamino-6-(5-phospho-D-ribosylamino)pyrimidin-4(3H)-one + 2 phosphate + 2 H(+). Functionally, catalyzes the formation of 2-amino-5-formylamino-6-ribofuranosylamino-4(3H)-pyrimidinone ribonucleotide monophosphate and inorganic phosphate from GTP. Also has an independent pyrophosphate phosphohydrolase activity. In Pyrobaculum arsenaticum (strain DSM 13514 / JCM 11321 / PZ6), this protein is GTP cyclohydrolase III.